A 104-amino-acid chain; its full sequence is MTHEGKEPVDLRVIRELWGVICERADCPDENSYTSRLLQDVKGIDKVLEKVGEESTEFILAVKNGVPERTTEEAADLFFHVLVALRAADVDLSGVIRELERRRK.

It belongs to the PRA-PH family.

The protein localises to the cytoplasm. The catalysed reaction is 1-(5-phospho-beta-D-ribosyl)-ATP + H2O = 1-(5-phospho-beta-D-ribosyl)-5'-AMP + diphosphate + H(+). The protein operates within amino-acid biosynthesis; L-histidine biosynthesis; L-histidine from 5-phospho-alpha-D-ribose 1-diphosphate: step 2/9. This is Phosphoribosyl-ATP pyrophosphatase from Methanoregula boonei (strain DSM 21154 / JCM 14090 / 6A8).